Consider the following 198-residue polypeptide: Transcriptional regulator GfcR (198 aa).

This sequence belongs to the purine/pyrimidine phosphoribosyltransferase family. GfcR subfamily.

In Thermoplasma acidophilum (strain ATCC 25905 / DSM 1728 / JCM 9062 / NBRC 15155 / AMRC-C165), this protein is Transcriptional regulator GfcR.